A 1132-amino-acid chain; its full sequence is Serine/threonine-protein kinase spk-1 (1132 aa).

Residues 75 to 95 (GGSLILTDIFPTVLFMFVVLF) traverse the membrane as a helical segment. Disordered regions lie at residues 240–388 (NEDQ…DSDD) and 419–481 (NKKA…KRGG). Composition is skewed to acidic residues over residues 281 to 290 (SEDEDVESQE) and 311 to 336 (DEPI…LGDE). Positions 362–372 (DSSVSSSTSST) are enriched in low complexity. Positions 373–388 (PDDDEDDSATSYDSDD) are enriched in acidic residues. Residues 421-433 (KAEVNANEERMDD) are compositionally biased toward basic and acidic residues. Residues 434–443 (VSVSPGRSDS) are compositionally biased toward low complexity. The 550-residue stretch at 495–1044 (YHVIRKLGWG…ANDALKHPFL (550 aa)) folds into the Protein kinase domain. ATP contacts are provided by residues 501–509 (LGWGHFSTV) and Lys524. The active-site Proton acceptor is Asp628. The disordered stretch occupies residues 1066–1121 (QVPEALDGNQEVYRDENDSNSASERSANRSAGSDDEEEFHMDRPGPSGVINEPADV). Positions 1084-1096 (SNSASERSANRSA) are enriched in low complexity.

Belongs to the protein kinase superfamily. Ser/Thr protein kinase family.

The protein localises to the membrane. It catalyses the reaction L-seryl-[protein] + ATP = O-phospho-L-seryl-[protein] + ADP + H(+). It carries out the reaction L-threonyl-[protein] + ATP = O-phospho-L-threonyl-[protein] + ADP + H(+). In terms of biological role, required for embryogenesis and germline development in both adult hermaphrodites and males. SR-protein kinase (SRPK) that binds directly to and phosphorylates RS domains. The sequence is that of Serine/threonine-protein kinase spk-1 (spk-1) from Caenorhabditis briggsae.